A 311-amino-acid chain; its full sequence is tRNA-cytidine(32) 2-sulfurtransferase (311 aa).

The short motif at 47–52 is the PP-loop motif element; sequence SGGKDS. [4Fe-4S] cluster is bound by residues Cys-122, Cys-125, and Cys-213.

It belongs to the TtcA family. As to quaternary structure, homodimer. Requires Mg(2+) as cofactor. [4Fe-4S] cluster is required as a cofactor.

It is found in the cytoplasm. The enzyme catalyses cytidine(32) in tRNA + S-sulfanyl-L-cysteinyl-[cysteine desulfurase] + AH2 + ATP = 2-thiocytidine(32) in tRNA + L-cysteinyl-[cysteine desulfurase] + A + AMP + diphosphate + H(+). Its pathway is tRNA modification. Catalyzes the ATP-dependent 2-thiolation of cytidine in position 32 of tRNA, to form 2-thiocytidine (s(2)C32). The sulfur atoms are provided by the cysteine/cysteine desulfurase (IscS) system. The chain is tRNA-cytidine(32) 2-sulfurtransferase from Shigella flexneri serotype 5b (strain 8401).